Here is a 406-residue protein sequence, read N- to C-terminus: Bifunctional enzyme IspD/IspF (406 aa).

Residues Met1–Val246 are 2-C-methyl-D-erythritol 4-phosphate cytidylyltransferase. Residues Arg247–Arg406 are 2-C-methyl-D-erythritol 2,4-cyclodiphosphate synthase. A divalent metal cation-binding residues include Asp253 and His255. Residues Asp253–His255 and His279–Ser280 each bind 4-CDP-2-C-methyl-D-erythritol 2-phosphate. His287 contacts a divalent metal cation. 4-CDP-2-C-methyl-D-erythritol 2-phosphate contacts are provided by residues Asp301 to Gly303, Thr377 to Glu380, Phe384, and Arg387.

This sequence in the N-terminal section; belongs to the IspD/TarI cytidylyltransferase family. IspD subfamily. It in the C-terminal section; belongs to the IspF family. Requires a divalent metal cation as cofactor.

The enzyme catalyses 2-C-methyl-D-erythritol 4-phosphate + CTP + H(+) = 4-CDP-2-C-methyl-D-erythritol + diphosphate. The catalysed reaction is 4-CDP-2-C-methyl-D-erythritol 2-phosphate = 2-C-methyl-D-erythritol 2,4-cyclic diphosphate + CMP. It functions in the pathway isoprenoid biosynthesis; isopentenyl diphosphate biosynthesis via DXP pathway; isopentenyl diphosphate from 1-deoxy-D-xylulose 5-phosphate: step 2/6. It participates in isoprenoid biosynthesis; isopentenyl diphosphate biosynthesis via DXP pathway; isopentenyl diphosphate from 1-deoxy-D-xylulose 5-phosphate: step 4/6. Functionally, bifunctional enzyme that catalyzes the formation of 4-diphosphocytidyl-2-C-methyl-D-erythritol from CTP and 2-C-methyl-D-erythritol 4-phosphate (MEP) (IspD), and catalyzes the conversion of 4-diphosphocytidyl-2-C-methyl-D-erythritol 2-phosphate (CDP-ME2P) to 2-C-methyl-D-erythritol 2,4-cyclodiphosphate (ME-CPP) with a corresponding release of cytidine 5-monophosphate (CMP) (IspF). The protein is Bifunctional enzyme IspD/IspF of Rhizobium leguminosarum bv. trifolii (strain WSM2304).